The primary structure comprises 301 residues: RNA polymerase II holoenzyme cyclin-like subunit (301 aa).

The Cyclin N-terminal domain maps to 53–142 (QQLIKLGKRM…LGECEFALIS (90 aa)).

The protein belongs to the cyclin family. Cyclin C subfamily. In terms of assembly, component of the srb8-11 complex, a regulatory module of the Mediator complex.

Its subcellular location is the nucleus. In terms of biological role, component of the srb8-11 complex. The srb8-11 complex is a regulatory module of the Mediator complex which is itself involved in regulation of basal and activated RNA polymerase II-dependent transcription. The srb8-11 complex may be involved in the transcriptional repression of a subset of genes regulated by Mediator. It may inhibit the association of the Mediator complex with RNA polymerase II to form the holoenzyme complex. The srb8-11 complex phosphorylates the C-terminal domain (CTD) of the largest subunit of RNA polymerase II. This is RNA polymerase II holoenzyme cyclin-like subunit (ssn8) from Aspergillus oryzae (strain ATCC 42149 / RIB 40) (Yellow koji mold).